Here is a 951-residue protein sequence, read N- to C-terminus: Valine--tRNA ligase (951 aa).

Residues 42–52 (PNVTGSLHMGH) carry the 'HIGH' region motif. Residues 554 to 558 (KMSKS) carry the 'KMSKS' region motif. Lys557 is an ATP binding site. The stretch at 880–944 (AGLINKEDEL…AEAKAKLIEQ (65 aa)) forms a coiled coil.

It belongs to the class-I aminoacyl-tRNA synthetase family. ValS type 1 subfamily. As to quaternary structure, monomer.

It is found in the cytoplasm. It catalyses the reaction tRNA(Val) + L-valine + ATP = L-valyl-tRNA(Val) + AMP + diphosphate. In terms of biological role, catalyzes the attachment of valine to tRNA(Val). As ValRS can inadvertently accommodate and process structurally similar amino acids such as threonine, to avoid such errors, it has a 'posttransfer' editing activity that hydrolyzes mischarged Thr-tRNA(Val) in a tRNA-dependent manner. The polypeptide is Valine--tRNA ligase (Shigella boydii serotype 4 (strain Sb227)).